Consider the following 337-residue polypeptide: Lipoyl synthase (337 aa).

[4Fe-4S] cluster contacts are provided by cysteine 81, cysteine 86, cysteine 92, cysteine 107, cysteine 111, cysteine 114, and serine 323. Residues 93–312 (FSHGTATFMI…EEYGNALGFS (220 aa)) enclose the Radical SAM core domain.

The protein belongs to the radical SAM superfamily. Lipoyl synthase family. [4Fe-4S] cluster serves as cofactor.

It localises to the cytoplasm. It catalyses the reaction [[Fe-S] cluster scaffold protein carrying a second [4Fe-4S](2+) cluster] + N(6)-octanoyl-L-lysyl-[protein] + 2 oxidized [2Fe-2S]-[ferredoxin] + 2 S-adenosyl-L-methionine + 4 H(+) = [[Fe-S] cluster scaffold protein] + N(6)-[(R)-dihydrolipoyl]-L-lysyl-[protein] + 4 Fe(3+) + 2 hydrogen sulfide + 2 5'-deoxyadenosine + 2 L-methionine + 2 reduced [2Fe-2S]-[ferredoxin]. The protein operates within protein modification; protein lipoylation via endogenous pathway; protein N(6)-(lipoyl)lysine from octanoyl-[acyl-carrier-protein]: step 2/2. In terms of biological role, catalyzes the radical-mediated insertion of two sulfur atoms into the C-6 and C-8 positions of the octanoyl moiety bound to the lipoyl domains of lipoate-dependent enzymes, thereby converting the octanoylated domains into lipoylated derivatives. This chain is Lipoyl synthase, found in Xanthomonas campestris pv. campestris (strain 8004).